Consider the following 272-residue polypeptide: NH(3)-dependent NAD(+) synthetase (272 aa).

ATP is bound at residue 45-52 (GISGGQDS). Asp-51 contacts Mg(2+). Deamido-NAD(+) is bound at residue Arg-138. Thr-158 is an ATP binding site. Glu-163 is a Mg(2+) binding site. Deamido-NAD(+)-binding residues include Lys-171 and Asp-178. Positions 187 and 209 each coordinate ATP. Residue 258–259 (HK) coordinates deamido-NAD(+).

The protein belongs to the NAD synthetase family. In terms of assembly, homodimer.

The catalysed reaction is deamido-NAD(+) + NH4(+) + ATP = AMP + diphosphate + NAD(+) + H(+). The protein operates within cofactor biosynthesis; NAD(+) biosynthesis; NAD(+) from deamido-NAD(+) (ammonia route): step 1/1. In terms of biological role, catalyzes the ATP-dependent amidation of deamido-NAD to form NAD. Uses ammonia as a nitrogen source. The sequence is that of NH(3)-dependent NAD(+) synthetase from Bacillus cereus (strain ATCC 10987 / NRS 248).